The following is an 812-amino-acid chain: Protein let-653 (812 aa).

An N-terminal signal peptide occupies residues 1–21 (MRHPLISLLLLIAFYSTSSEA). 2 consecutive Apple domains span residues 26–116 (CNSF…WKYC) and 123–209 (CSGE…ENNC). 6 cysteine pairs are disulfide-bonded: C26–C116, C53–C88, C57–C72, C123–C209, C154–C178, and C158–C166. N172, N211, and N272 each carry an N-linked (GlcNAc...) asparagine glycan. A ZP domain is found at 221 to 725 (ECRDNGISVS…NTCDDVEGCD (505 aa)). 2 stretches are compositionally biased toward low complexity: residues 375-449 (QVTT…STTT) and 496-584 (PTTT…PASS). Disordered stretches follow at residues 375 to 461 (QVTT…STIM) and 494 to 584 (DVPT…PASS). N-linked (GlcNAc...) asparagine glycosylation occurs at N771.

Post-translationally, cleaved at the C-terminal domain. As to expression, expressed in external cuticle-producing epithelial cells including the epidermis, vulva, rectum, excretory duct and excretory pore.

Its subcellular location is the apical cell membrane. It is found in the secreted. The protein resides in the extracellular space. In terms of biological role, required for epithelial tube development and shaping. Involved in the morphogenesis and function of the three unicellular tubes of the excretory system, the canal cell, the duct cell and the pore cell. Also plays a role in cuticle development, alae formation and shaping of the vulval lumen. Required for larval development. This chain is Protein let-653, found in Caenorhabditis elegans.